We begin with the raw amino-acid sequence, 251 residues long: Cyclohexanol dehydrogenase (251 aa).

D42, N95, Y161, K165, I194, and T196 together coordinate NAD(+). The Proton acceptor role is filled by Y161.

Belongs to the short-chain dehydrogenases/reductases (SDR) family.

The catalysed reaction is cyclohexanol + NAD(+) = cyclohexanone + NADH + H(+). Catalyzes the oxidation of cyclohexanol to cyclohexanone. Required for the conversion of cyclohexanol to adipic acid. In Acinetobacter sp. (strain SE19), this protein is Cyclohexanol dehydrogenase.